Here is a 732-residue protein sequence, read N- to C-terminus: Elongation factor 2 (732 aa).

The region spanning 19–230 (ERIRNMGIAA…VSFKDIVELT (212 aa)) is the tr-type G domain. Residues 28–35 (AHIDHGKT), 94–98 (DTPGH), and 148–151 (NKVD) each bind GTP. At His597 the chain carries Diphthamide.

This sequence belongs to the TRAFAC class translation factor GTPase superfamily. Classic translation factor GTPase family. EF-G/EF-2 subfamily.

The protein resides in the cytoplasm. In terms of biological role, catalyzes the GTP-dependent ribosomal translocation step during translation elongation. During this step, the ribosome changes from the pre-translocational (PRE) to the post-translocational (POST) state as the newly formed A-site-bound peptidyl-tRNA and P-site-bound deacylated tRNA move to the P and E sites, respectively. Catalyzes the coordinated movement of the two tRNA molecules, the mRNA and conformational changes in the ribosome. This chain is Elongation factor 2, found in Thermococcus gammatolerans (strain DSM 15229 / JCM 11827 / EJ3).